The following is a 997-amino-acid chain: MASSSSSASRTWRYRVFTSFHGSDVRTSFLSHFRKQFNNNGITMFDDQRILRGETISPALTQAIRESRISIVLLSKNYASSGWCLDELLEILKCKDDMGQIVMTVFYGVDPSDVRKQTGEFGIAFNETCACRTEEERQKWSQALNYVGNIAGEHLLNWDNEAKMIEKIARDVSEKLNVTPCRDFDGMVGIEAHLRKIQSLLDLDNDEVKMVAISGPAGIGKSTIGRALHSLLSNRFHHTCFVDNLRGSHPIGLDEYGLKLRLQEQLLSKILNQDGSRICHLGAIKERLCDMKVFIILDDVNDVKQLEALANESNWFGPGSRIIVTTENKELLKQHGINNTYYVGFPSDEEAIKILCRYAFRQSSSRHGFKKLTRSVTELCGKLPLGLRVVGSSLHGKNEEEWEYVIRRLETIIDRDIEQVLRVGYESLHENEQSLFLHIAIFFNYEDGDLVKAMLAENDLDIEHELNILVNKSLIYISTDGRIRMHKLLQLVGRQANQREEPWKRRILIDAQEICHVLENDIGTGAVSGILFDTSGINEVSISNKALRRMCNLRFLSVYKTKHDGYNRMDIPEDMEFPPRLRLLHWDAYPSKCLPLKFRAENLVELDMKDSRLEYLWPGTQLLTKLKKLNLEGSYNLKELPDLSNATNLEMLDLSVCLALAELPSSIKNLHKLDVIYMDLCESLHMIPTNINLASLETMYMTGCPQLKTFPAFSTKIKRLYLVRTGVEEVPASITHCSRLLKIDLSGSRNLKSITHLPSSLQTLDLSSTDIEMIADSCIKDLQRLDHLRLCRCRKLKSLPELPASLRLLTAEDCESLERVTYPLNTPTGQLNFTNCLKLGEEAQRVIIQQSLVKHACFPGSVMPSEFNHRARGNSLKILVKSSASFAFKACVLISPRQLQCERNQRRVKIRCRVTDGRGRFVGSKVVSLEHPNHSTGIRTKHLCFFNGVLTEVSCDALCFVFKISAYNPLDNYEISECAVQILTNEPERRSCDGGSE.

Residues Trp-12–Leu-176 enclose the TIR domain. Residue Glu-87 is part of the active site. The 257-residue stretch at Glu-191–Asp-447 folds into the NB-ARC domain. LRR repeat units lie at residues Leu-194–Gly-218, Thr-534–Ser-557, Ala-600–Leu-623, Thr-624–Thr-647, Leu-649–Leu-670, His-671–Leu-693, Ala-694–Ser-714, Thr-715–Cys-737, Pro-758–Asp-781, and Gln-783–Leu-808.

The catalysed reaction is NAD(+) + H2O = ADP-D-ribose + nicotinamide + H(+). TIR-NB-LRR receptor-like protein that confers resistance to the pathogen Leptosphaeria maculans (blackleg disease). This chain is Disease resistance protein RML1A, found in Arabidopsis thaliana (Mouse-ear cress).